A 299-amino-acid polypeptide reads, in one-letter code: Oxygen-dependent coproporphyrinogen-III oxidase (299 aa).

Position 92 (Ser92) interacts with substrate. His96 and His106 together coordinate a divalent metal cation. His106 acts as the Proton donor in catalysis. 108 to 110 (NVR) is a substrate binding site. The a divalent metal cation site is built by His145 and His175. Residues 240-275 (YVEFNLVWDRGTLFGLQTGGRTESILMSMPPLVRWE) form an important for dimerization region. 258–260 (GGR) lines the substrate pocket.

The protein belongs to the aerobic coproporphyrinogen-III oxidase family. In terms of assembly, homodimer. The cofactor is a divalent metal cation.

It localises to the cytoplasm. The enzyme catalyses coproporphyrinogen III + O2 + 2 H(+) = protoporphyrinogen IX + 2 CO2 + 2 H2O. The protein operates within porphyrin-containing compound metabolism; protoporphyrin-IX biosynthesis; protoporphyrinogen-IX from coproporphyrinogen-III (O2 route): step 1/1. Its function is as follows. Involved in the heme biosynthesis. Catalyzes the aerobic oxidative decarboxylation of propionate groups of rings A and B of coproporphyrinogen-III to yield the vinyl groups in protoporphyrinogen-IX. The sequence is that of Oxygen-dependent coproporphyrinogen-III oxidase from Klebsiella pneumoniae (strain 342).